The chain runs to 577 residues: Type I restriction enzyme MjaVII methylase subunit (577 aa).

Residues 251–256, 281–283, E306, and 335–336 each bind S-adenosyl-L-methionine; these read EVYTPV, SGT, and DS.

It belongs to the N4/N6-methyltransferase family. As to quaternary structure, the type I restriction/modification system is composed of three polypeptides R, M and S.

It carries out the reaction a 2'-deoxyadenosine in DNA + S-adenosyl-L-methionine = an N(6)-methyl-2'-deoxyadenosine in DNA + S-adenosyl-L-homocysteine + H(+). In terms of biological role, the subtype gamma methyltransferase (M) subunit of a type I restriction enzyme. The M and S subunits together form a methyltransferase (MTase) that methylates A-3 on the top and bottom strands of the sequence 5'-CAAN(7)TGG-3'. In the presence of the R subunit the complex can also act as an endonuclease, binding to the same target sequence but cutting the DNA some distance from this site. Whether the DNA is cut or modified depends on the methylation state of the target sequence. When the target site is unmodified, the DNA is cut. When the target site is hemimethylated, the complex acts as a maintenance MTase modifying the DNA so that both strands become methylated. After locating a non-methylated recognition site, the enzyme complex serves as a molecular motor that translocates DNA in an ATP-dependent manner until a collision occurs that triggers cleavage. The chain is Type I restriction enzyme MjaVII methylase subunit from Methanocaldococcus jannaschii (strain ATCC 43067 / DSM 2661 / JAL-1 / JCM 10045 / NBRC 100440) (Methanococcus jannaschii).